Reading from the N-terminus, the 200-residue chain is MHTKGPTPQQHDGSALRIGIVHARWNETIIEPLLAGTKAKLLACGVKESNIVVQSVPGSWELPIAVQRLYSASQLQTPSSGPSLSAGDLLGSSTTDLTALPTTTASSTGPFDALIAIGVLIKGETMHFEYIADSVSHGLMRVQLDTGVPVIFGVLTVLTDDQAKARAGVIEGSHNHGEDWGLAAVEMGVRRRDWAAGKTE.

Residues W25, 59 to 61 (SWE), and 119 to 121 (VLI) each bind 5-amino-6-(D-ribitylamino)uracil. 124–125 (ET) serves as a coordination point for (2S)-2-hydroxy-3-oxobutyl phosphate. The active-site Proton donor is the H127. F152 provides a ligand contact to 5-amino-6-(D-ribitylamino)uracil. A (2S)-2-hydroxy-3-oxobutyl phosphate-binding site is contributed by R166.

It belongs to the DMRL synthase family. Homopentamer.

The catalysed reaction is (2S)-2-hydroxy-3-oxobutyl phosphate + 5-amino-6-(D-ribitylamino)uracil = 6,7-dimethyl-8-(1-D-ribityl)lumazine + phosphate + 2 H2O + H(+). The protein operates within cofactor biosynthesis; riboflavin biosynthesis; riboflavin from 2-hydroxy-3-oxobutyl phosphate and 5-amino-6-(D-ribitylamino)uracil: step 1/2. Catalyzes the formation of 6,7-dimethyl-8-ribityllumazine by condensation of 5-amino-6-(D-ribitylamino)uracil with 3,4-dihydroxy-2-butanone 4-phosphate. This is the penultimate step in the biosynthesis of riboflavin. This Pyricularia oryzae (strain 70-15 / ATCC MYA-4617 / FGSC 8958) (Rice blast fungus) protein is 6,7-dimethyl-8-ribityllumazine synthase.